The following is a 474-amino-acid chain: Methylenetetrahydrofolate--tRNA-(uracil-5-)-methyltransferase TrmFO (474 aa).

9-14 is an FAD binding site; that stretch reads GGGLAG.

This sequence belongs to the MnmG family. TrmFO subfamily. FAD serves as cofactor.

It is found in the cytoplasm. The enzyme catalyses uridine(54) in tRNA + (6R)-5,10-methylene-5,6,7,8-tetrahydrofolate + NADH + H(+) = 5-methyluridine(54) in tRNA + (6S)-5,6,7,8-tetrahydrofolate + NAD(+). The catalysed reaction is uridine(54) in tRNA + (6R)-5,10-methylene-5,6,7,8-tetrahydrofolate + NADPH + H(+) = 5-methyluridine(54) in tRNA + (6S)-5,6,7,8-tetrahydrofolate + NADP(+). Its function is as follows. Catalyzes the folate-dependent formation of 5-methyl-uridine at position 54 (M-5-U54) in all tRNAs. This Methylorubrum extorquens (strain PA1) (Methylobacterium extorquens) protein is Methylenetetrahydrofolate--tRNA-(uracil-5-)-methyltransferase TrmFO.